Here is a 255-residue protein sequence, read N- to C-terminus: MAVISMKQLLECGVHFGHQTRRWNPKMAKYIFTERNGIHVIDLQQTVKLADQAYEFVRDAAANDAVILFVGTKKQAAEAVADEATRAGQYFINHRWLGGTLTNWGTIQKRIARLKEIKRMEEEGTFDVLPKKEVALLNKQRARLEKFLGGIEDMPRIPDVMYVVDPHKEQIAVKEAKKLGIPVVAMVDTNADPDDIDIIIPANDDAIRAVKLITAKLADAIIEGRQGEDADIAFEADTQADSIEEIVEVVEGDNA.

This sequence belongs to the universal ribosomal protein uS2 family.

The chain is Small ribosomal subunit protein uS2 from Streptococcus pyogenes serotype M49 (strain NZ131).